The following is a 187-amino-acid chain: Endoribonuclease YbeY (187 aa).

Residues His-148, His-152, and His-158 each contribute to the Zn(2+) site.

This sequence belongs to the endoribonuclease YbeY family. The cofactor is Zn(2+).

It is found in the cytoplasm. Functionally, single strand-specific metallo-endoribonuclease involved in late-stage 70S ribosome quality control and in maturation of the 3' terminus of the 16S rRNA. This Ralstonia nicotianae (strain ATCC BAA-1114 / GMI1000) (Ralstonia solanacearum) protein is Endoribonuclease YbeY.